We begin with the raw amino-acid sequence, 515 residues long: Interferon-induced, double-stranded RNA-activated protein kinase (515 aa).

Ala2 is modified (N-acetylalanine). Residues Phe8–Asn76 form the DRBM 1 domain. Residue Lys68 forms a Glycyl lysine isopeptide (Lys-Gly) (interchain with G-Cter in ISG15) linkage. Thr84 carries the post-translational modification Phosphothreonine. The region spanning Asn95–Lys162 is the DRBM 2 domain. Tyr96 bears the Phosphotyrosine; by autocatalysis mark. Lys154 participates in a covalent cross-link: Glycyl lysine isopeptide (Lys-Gly) (interchain with G-Cter in ISG15). A Phosphotyrosine; by autocatalysis modification is found at Tyr157. Positions Glu204–Pro224 are disordered. Thr233 bears the Phosphothreonine mark. An interaction with TRAF5 region spans residues Asp241–Cys515. The Protein kinase domain maps to Phe242–Arg504. Ile248 to Val256 is a binding site for ATP. Tyr268 carries the post-translational modification Phosphotyrosine; by autocatalysis. Position 271 (Lys271) interacts with ATP. The active-site Proton acceptor is the Asp376. Phosphothreonine; by autocatalysis occurs at positions 409 and 414. A Phosphoserine modification is found at Ser419.

It belongs to the protein kinase superfamily. Ser/Thr protein kinase family. GCN2 subfamily. As to quaternary structure, homodimer. Interacts with DNAJC3 and STRBP. Forms a complex with FANCA, FANCC, FANCG and HSP70. Interacts with ADAR/ADAR1. The inactive form interacts with NCK1. Interacts (via the kinase catalytic domain) with STAT3 (via SH2 domain), TRAF2 (C-terminus), TRAF5 (C-terminus) and TRAF6 (C-terminus). Interacts with MAP2K6, TARBP2, NLRP1, NLRC4 and AIM2. Interacts (via DRBM 1 domain) with DUS2L (via DRBM domain). Interacts with DHX9 (via N-terminus) and this interaction is dependent upon activation of the kinase. The inactive form interacts with GSN. Interacts with IKBKB/IKKB, NPM1, NLRP3 and IRS1. Autophosphorylated on several Ser, Thr and Tyr residues. Autophosphorylation of Thr-414 is dependent on Thr-409 and is stimulated by dsRNA binding and dimerization. Autophosphorylation apparently leads to the activation of the kinase. Tyrosine autophosphorylation is essential for efficient dsRNA-binding, dimerization, and kinase activation. As to expression, expressed in heart, lung, brain, kidney, testes, thymus and bone marrow.

The protein localises to the cytoplasm. It is found in the nucleus. It localises to the perinuclear region. The enzyme catalyses L-seryl-[protein] + ATP = O-phospho-L-seryl-[protein] + ADP + H(+). The catalysed reaction is L-threonyl-[protein] + ATP = O-phospho-L-threonyl-[protein] + ADP + H(+). It carries out the reaction L-tyrosyl-[protein] + ATP = O-phospho-L-tyrosyl-[protein] + ADP + H(+). With respect to regulation, initially produced in an inactive form and is activated by binding to viral dsRNA, which causes dimerization and autophosphorylation in the activation loop and stimulation of function. ISGylation can activate it in the absence of viral infection. Can also be activated by heparin, pro-inflammatory stimuli, growth factors, cytokines, oxidative stress and the cellular protein PRKRA. Activity is markedly stimulated by manganese ions. Activation is blocked by the cellular proteins TARBP2, DUS2L, NPM1, NCK1 and ADAR. Its function is as follows. IFN-induced dsRNA-dependent serine/threonine-protein kinase that phosphorylates the alpha subunit of eukaryotic translation initiation factor 2 (EIF2S1/eIF-2-alpha) and plays a key role in the innate immune response to viral infection. Inhibits viral replication via the integrated stress response (ISR): EIF2S1/eIF-2-alpha phosphorylation in response to viral infection converts EIF2S1/eIF-2-alpha in a global protein synthesis inhibitor, resulting to a shutdown of cellular and viral protein synthesis, while concomitantly initiating the preferential translation of ISR-specific mRNAs, such as the transcriptional activator ATF4. Exerts its antiviral activity on a wide range of DNA and RNA viruses including west nile virus (WNV), sindbis virus (SV), foot-and-mouth virus (FMDV), semliki Forest virus (SFV) and lymphocytic choriomeningitis virus (LCMV). Also involved in the regulation of signal transduction, apoptosis, cell proliferation and differentiation: phosphorylates other substrates including p53/TP53, PPP2R5A, DHX9, ILF3, and IRS1. In addition to serine/threonine-protein kinase activity, also has tyrosine-protein kinase activity and phosphorylates CDK1 at 'Tyr-4' upon DNA damage, facilitating its ubiquitination and proteasomal degradation. Either as an adapter protein and/or via its kinase activity, can regulate various signaling pathways (p38 MAP kinase, NF-kappa-B and insulin signaling pathways) and transcription factors (JUN, STAT1, STAT3, IRF1, ATF3) involved in the expression of genes encoding pro-inflammatory cytokines and IFNs. Activates the NF-kappa-B pathway via interaction with IKBKB and TRAF family of proteins and activates the p38 MAP kinase pathway via interaction with MAP2K6. Can act as both a positive and negative regulator of the insulin signaling pathway (ISP). Negatively regulates ISP by inducing the inhibitory phosphorylation of insulin receptor substrate 1 (IRS1) at 'Ser-312' and positively regulates ISP via phosphorylation of PPP2R5A which activates FOXO1, which in turn up-regulates the expression of insulin receptor substrate 2 (IRS2). Can regulate NLRP3 inflammasome assembly and the activation of NLRP3, NLRP1, AIM2 and NLRC4 inflammasomes. Plays a role in the regulation of the cytoskeleton by binding to gelsolin (GSN), sequestering the protein in an inactive conformation away from actin. This is Interferon-induced, double-stranded RNA-activated protein kinase (Eif2ak2) from Mus musculus (Mouse).